The following is a 106-amino-acid chain: Flagellar transcriptional regulator FlhD (106 aa).

Belongs to the FlhD family. Homodimer; disulfide-linked. Forms a heterohexamer composed of two FlhC and four FlhD subunits. Each FlhC binds a FlhD dimer, forming a heterotrimer, and a hexamer assembles by dimerization of two heterotrimers.

It is found in the cytoplasm. Functionally, functions in complex with FlhC as a master transcriptional regulator that regulates transcription of several flagellar and non-flagellar operons by binding to their promoter region. Activates expression of class 2 flagellar genes, including fliA, which is a flagellum-specific sigma factor that turns on the class 3 genes. Also regulates genes whose products function in a variety of physiological pathways. In Burkholderia pseudomallei (strain 1710b), this protein is Flagellar transcriptional regulator FlhD.